The sequence spans 289 residues: MQGVYPAIVTPFKDGKVDYDGLRTNIDYLIENGVSGVIPVGTTGESPTLTPLEHEKVIEKVVEFVDGRVEVIAGTGSNSTSEALEFSQYAEDVGVDGVLLITPYYNKPSQEGLKRHFGEIANSINVPIVLYNVPSRTALNIEPETIKYLFEEYSNITAIKEANPNLSQVSEVLDSCNIDVLSGNDELTLPIISLGGKGVVSVVANIAPKEFVQMVDFANAGKFDKAKEIHYKLFPLMKLMFIETNPIPIKTAMNMLGMPSGELRLPLCEMAESNKLKLQNALNNLGLLK.

Thr-43 is a binding site for pyruvate. Catalysis depends on Tyr-131, which acts as the Proton donor/acceptor. Lys-160 functions as the Schiff-base intermediate with substrate in the catalytic mechanism. A pyruvate-binding site is contributed by Val-200.

The protein belongs to the DapA family. In terms of assembly, homotetramer; dimer of dimers.

It localises to the cytoplasm. It carries out the reaction L-aspartate 4-semialdehyde + pyruvate = (2S,4S)-4-hydroxy-2,3,4,5-tetrahydrodipicolinate + H2O + H(+). It functions in the pathway amino-acid biosynthesis; L-lysine biosynthesis via DAP pathway; (S)-tetrahydrodipicolinate from L-aspartate: step 3/4. Functionally, catalyzes the condensation of (S)-aspartate-beta-semialdehyde [(S)-ASA] and pyruvate to 4-hydroxy-tetrahydrodipicolinate (HTPA). The protein is 4-hydroxy-tetrahydrodipicolinate synthase of Methanococcus maripaludis (strain C6 / ATCC BAA-1332).